Consider the following 391-residue polypeptide: MVQISDLPRDLTEEVLSRIPVTSMRAVRFTCKKWNTLSKDRSFTKKHLRGARAAAKKKQTKEFQVIMMIQFRVYLYSVNLLNPSIERIGKLISLDVEDHVDISKIFHCGGLLLCITKDISRLVVWNPYSGQTRWIKPRNSYHRLDRYALGYEEKNKSCRCYKILRFMDDYEDDRALRLIREFEIYDLNSDSWKVVNVTPDWDVEFYHRGLSLKGNTYWFAQEKLPPLPRGRVITISDMADFLLCFDFTRERFGPRLPLPFHSFVEDTVTLSSVRDKKLAVLFQPCSASTVKIWISRKIEPNAVSWRKVFLAVDMKSLTGFQFDINAASFFVDEKKKVAMVLDKDRFSYKFTRNIAYIIGKKGYFEKVDLGESTVSSCASLVCSYVPSSVQI.

The F-box domain maps to 1–47; it reads MVQISDLPRDLTEEVLSRIPVTSMRAVRFTCKKWNTLSKDRSFTKKH. 2 Kelch repeats span residues 104–154 and 163–215; these read KIFH…YEEK and ILRF…LKGN.

Part of a SCF (ASK-cullin-F-box) protein ligase complex. Interacts with ASK11.

It localises to the nucleus. The protein operates within protein modification; protein ubiquitination. Its function is as follows. Component of SCF(ASK-cullin-F-box) E3 ubiquitin ligase complexes, which may mediate the ubiquitination and subsequent proteasomal degradation of target proteins. This Arabidopsis thaliana (Mouse-ear cress) protein is F-box/kelch-repeat protein At3g16740.